A 241-amino-acid chain; its full sequence is 2-C-methyl-D-erythritol 4-phosphate cytidylyltransferase (241 aa).

It belongs to the IspD/TarI cytidylyltransferase family. IspD subfamily.

It carries out the reaction 2-C-methyl-D-erythritol 4-phosphate + CTP + H(+) = 4-CDP-2-C-methyl-D-erythritol + diphosphate. The protein operates within isoprenoid biosynthesis; isopentenyl diphosphate biosynthesis via DXP pathway; isopentenyl diphosphate from 1-deoxy-D-xylulose 5-phosphate: step 2/6. Its function is as follows. Catalyzes the formation of 4-diphosphocytidyl-2-C-methyl-D-erythritol from CTP and 2-C-methyl-D-erythritol 4-phosphate (MEP). In Baumannia cicadellinicola subsp. Homalodisca coagulata, this protein is 2-C-methyl-D-erythritol 4-phosphate cytidylyltransferase.